Consider the following 429-residue polypeptide: MKLQKPKGTQDILPAESAKWQYVEGFAREIFKRYNYAEVRTPIFEHYEVISRSVGDTTDIVTKEMYDFYDKGDRHITLRPEGTAPVVRSYVENKLFAPEVQKPSKFYYMGPMFRYERPQAGRLRQFHQIGVECFGSSNPATDVETIAMAAHFLKEIGIQGVKLHLNTLGNPESRAAYRQALIDYLTPLKETLSKDSQRRLEENPLRVLDSKEKEDKVAVENAPSILDFLDEESQTHFDAVRQMLENLGVDYIIDTNMVRGLDYYNHTIFEFITEIEGNDLTVCAGGRYDGLVAYFGGPETAGFGFGLGVERLLLILEKQGVALPIENALDVYIAVLGDGANVKALELVQALRQQGFKAERDYLNRKLKAQFKSADVFAAKTLITLGESEVESGQVTVKNNQTREEVQVSLETISQNFSEIFEKLGFYTQ.

The protein belongs to the class-II aminoacyl-tRNA synthetase family. As to quaternary structure, homodimer.

It is found in the cytoplasm. The catalysed reaction is tRNA(His) + L-histidine + ATP = L-histidyl-tRNA(His) + AMP + diphosphate + H(+). In Streptococcus pneumoniae serotype 2 (strain D39 / NCTC 7466), this protein is Histidine--tRNA ligase.